The chain runs to 348 residues: Protein RecA (348 aa).

66–73 (GPESSGKT) provides a ligand contact to ATP.

It belongs to the RecA family.

It is found in the cytoplasm. Functionally, can catalyze the hydrolysis of ATP in the presence of single-stranded DNA, the ATP-dependent uptake of single-stranded DNA by duplex DNA, and the ATP-dependent hybridization of homologous single-stranded DNAs. It interacts with LexA causing its activation and leading to its autocatalytic cleavage. The sequence is that of Protein RecA from Legionella pneumophila.